The primary structure comprises 461 residues: Cysteine--tRNA ligase (461 aa).

Position 30 (cysteine 30) interacts with Zn(2+). A 'HIGH' region motif is present at residues 32–42; the sequence is VTVYDLCHIGH. Zn(2+) is bound by residues cysteine 211, histidine 236, and glutamate 240. The short motif at 268-272 is the 'KMSKS' region element; it reads KMSKS. Lysine 271 lines the ATP pocket.

The protein belongs to the class-I aminoacyl-tRNA synthetase family. As to quaternary structure, monomer. Zn(2+) serves as cofactor.

Its subcellular location is the cytoplasm. It carries out the reaction tRNA(Cys) + L-cysteine + ATP = L-cysteinyl-tRNA(Cys) + AMP + diphosphate. The chain is Cysteine--tRNA ligase from Shewanella sp. (strain MR-4).